The sequence spans 276 residues: DnaJ homolog subfamily C member 27-B (276 aa).

Residues 23 to 30 (GNAEVGKS), 71 to 75 (DMAGH), and 137 to 140 (NKID) contribute to the GTP site. In terms of domain architecture, J spans 220–276 (DSWDMLGVKPGATRDEVNKAYRKLAVLLHPDKCVAPGSEDAFKAVVNARTALLKNIK).

This sequence belongs to the small GTPase superfamily. Rab family.

The protein resides in the nucleus. GTPase possibly involved in regulation of the MEK/ERK pathway. In Xenopus laevis (African clawed frog), this protein is DnaJ homolog subfamily C member 27-B (dnajc27-b).